Consider the following 273-residue polypeptide: Probable nicotinate-nucleotide pyrophosphorylase [carboxylating] (273 aa).

Residues arginine 91, 124–126, arginine 148, lysine 158, glutamate 188, aspartate 209, 235–237, and 256–258 contribute to the substrate site; these read TRK, SGN, and VGA.

This sequence belongs to the NadC/ModD family. In terms of assembly, hexamer formed by 3 homodimers.

The catalysed reaction is nicotinate beta-D-ribonucleotide + CO2 + diphosphate = quinolinate + 5-phospho-alpha-D-ribose 1-diphosphate + 2 H(+). It participates in cofactor biosynthesis; NAD(+) biosynthesis; nicotinate D-ribonucleotide from quinolinate: step 1/1. Its function is as follows. Involved in the catabolism of quinolinic acid (QA). This chain is Probable nicotinate-nucleotide pyrophosphorylase [carboxylating] (nadC), found in Helicobacter pylori (strain ATCC 700392 / 26695) (Campylobacter pylori).